Reading from the N-terminus, the 284-residue chain is MDPKFLVVEIDSKERALQLVQVMLENGFARFMLLDDLSRHPTLDRIQREEPRISRDELRETASSPVTFETRHSPYPVHEQKVLFPSFSQVSNSMVTSTGIRQEASSVGVGPIEDDDIVEEEEEEDIRLTSKPCVKRRYDHHAEEQEYRDQLMSLLSGEPEIVPIGVNSNDEPSGSNSDSAAKKAKSVGDYHECQLCGVRVKTPRSGRWNLQMHVIALHCVGRQYKCKQCDYLDYRKSTMRKHTVSQHGSDIPPHNITDNIMKAEWHAAMIKCFPEFAHRTGFLN.

Over residues 50 to 60 (EPRISRDELRE) the composition is skewed to basic and acidic residues. Residues 50–71 (EPRISRDELRETASSPVTFETR) are disordered. The segment at 224–247 (YKCKQCDYLDYRKSTMRKHTVSQH) adopts a C2H2-type zinc-finger fold.

As to expression, expressed in FLP neurons.

It localises to the nucleus. In terms of biological role, positively regulates the RNA polymerase III-associated transcription of small non-coding RNAs. This chain is Transcription factor lir-3, found in Caenorhabditis elegans.